Reading from the N-terminus, the 736-residue chain is Prolyl 3-hydroxylase 3 (736 aa).

Positions 1–20 (MLRLLRPLLLLLLLPPPGSP) are cleaved as a signal peptide. 3 TPR repeats span residues 37 to 70 (PDLL…QAAL), 154 to 187 (REPY…NPMH), and 216 to 249 (HWAA…SLAQ). The interval 253 to 275 (CRADCEGPEEQQGAEEEEDGAAS) is disordered. Residues 258-272 (EGPEEQQGAEEEEDG) are compositionally biased toward acidic residues. One copy of the TPR 4 repeat lies at 316 to 349 (PNQLRRLHEAHAQVGNLSQAIENVLSVLLFYPED). N-linked (GlcNAc...) asparagine glycans are attached at residues N331 and N462. One can recognise a Fe2OG dioxygenase domain in the interval 561 to 675 (THLVCRSAIE…RCALALWHTW (115 aa)). Residues H584, D586, and H656 each coordinate Fe cation. R666 is an active-site residue. Residues 681–709 (EQEWIEAKELLQESQEEEEEEEEEMPSKD) are a coiled coil. A disordered region spans residues 689-736 (ELLQESQEEEEEEEEEMPSKDPSPEPPSRRHQRVQDKTGRAPRVREEL). A compositionally biased stretch (acidic residues) spans 694–704 (SQEEEEEEEEE). Basic and acidic residues predominate over residues 721 to 736 (RVQDKTGRAPRVREEL). The short motif at 733–736 (REEL) is the Prevents secretion from ER element.

It belongs to the leprecan family. In terms of assembly, identified in a complex with PLOD1 and P3H4. The cofactor is Fe cation. It depends on L-ascorbate as a cofactor. As to expression, detected in fetal cartilage (at protein level). Weak expression in heart, lung, ovary and skeletal muscle.

The protein resides in the endoplasmic reticulum. It carries out the reaction L-prolyl-[collagen] + 2-oxoglutarate + O2 = trans-3-hydroxy-L-prolyl-[collagen] + succinate + CO2. Its function is as follows. Part of a complex composed of PLOD1, P3H3 and P3H4 that catalyzes hydroxylation of lysine residues in collagen alpha chains and is required for normal assembly and cross-linkling of collagen fibrils. Required for normal hydroxylation of lysine residues in type I collagen chains in skin, bone, tendon, aorta and cornea. Required for normal skin stability via its role in hydroxylation of lysine residues in collagen alpha chains and in collagen fibril assembly. Apparently not required for normal prolyl 3-hydroxylation on collagen chains, possibly because it functions redundantly with other prolyl 3-hydroxylases. The chain is Prolyl 3-hydroxylase 3 from Homo sapiens (Human).